A 247-amino-acid chain; its full sequence is Ribosomal RNA small subunit methyltransferase G (247 aa).

S-adenosyl-L-methionine is bound by residues Gly86, Leu91, and Arg154.

Belongs to the methyltransferase superfamily. RNA methyltransferase RsmG family.

The protein resides in the cytoplasm. Specifically methylates the N7 position of a guanine in 16S rRNA. This chain is Ribosomal RNA small subunit methyltransferase G, found in Leptospira biflexa serovar Patoc (strain Patoc 1 / Ames).